A 793-amino-acid polypeptide reads, in one-letter code: Phenylalanine--tRNA ligase beta subunit (793 aa).

The tRNA-binding domain maps to 39–148 (AAPFKGVKAA…EGDFPGVDLH (110 aa)). The region spanning 401–476 (PPQATIILRK…RLYGYDRLPS (76 aa)) is the B5 domain. Residues D454, D460, E463, and E464 each coordinate Mg(2+). The FDX-ACB domain occupies 699–792 (SKFPAIRRDI…LVTELGAIIR (94 aa)).

The protein belongs to the phenylalanyl-tRNA synthetase beta subunit family. Type 1 subfamily. In terms of assembly, tetramer of two alpha and two beta subunits. Requires Mg(2+) as cofactor.

The protein localises to the cytoplasm. It carries out the reaction tRNA(Phe) + L-phenylalanine + ATP = L-phenylalanyl-tRNA(Phe) + AMP + diphosphate + H(+). This is Phenylalanine--tRNA ligase beta subunit from Nitrosococcus oceani (strain ATCC 19707 / BCRC 17464 / JCM 30415 / NCIMB 11848 / C-107).